A 238-amino-acid chain; its full sequence is Orotidine 5'-phosphate decarboxylase (238 aa).

Substrate contacts are provided by residues Asp-18, Lys-40, 67-76, Thr-122, Arg-183, Gln-192, and Arg-213; that span reads DMKLLDIDNT. Lys-69 functions as the Proton donor in the catalytic mechanism.

The protein belongs to the OMP decarboxylase family. Type 1 subfamily. Homodimer.

It catalyses the reaction orotidine 5'-phosphate + H(+) = UMP + CO2. It participates in pyrimidine metabolism; UMP biosynthesis via de novo pathway; UMP from orotate: step 2/2. In terms of biological role, catalyzes the decarboxylation of orotidine 5'-monophosphate (OMP) to uridine 5'-monophosphate (UMP). The protein is Orotidine 5'-phosphate decarboxylase of Brucella abortus (strain S19).